Reading from the N-terminus, the 50-residue chain is uncharacterized protein (50 aa).

This is an uncharacterized protein from Rickettsia prowazekii (strain Madrid E).